The sequence spans 98 residues: Gas vesicle protein J2 (98 aa).

The disordered stretch occupies residues 75–98 (AGVDADDSKSVLERPDPPTTEGSE). Over residues 80-90 (DDSKSVLERPD) the composition is skewed to basic and acidic residues.

It belongs to the gas vesicle GvpA family. GvpF to GvpM interact with each other in vitro, and may form multi-subunit complex(es). Interacts with GvpA.

It is found in the gas vesicle. A minor component of the gas vesicle. Proteins GvpF to GvpM might be involved in nucleating gas vesicle formation. Gas vesicles are hollow, gas filled proteinaceous nanostructures found in several microbial planktonic microorganisms. They allow positioning of halobacteria at the optimal depth for growth in the poorly aerated, shallow brine pools of their habitat. Functionally, expression of 2 c-vac DNA fragments containing 2 divergently transcribed regions (gvpE-gvpF-gvpG-gvpH-gvpI-gvpJ-gvpK-gvpL-gvpM and gvpA-gvpC-gvpN-gvpO) allows H.volcanii to produce gas vesicles. This Halobacterium salinarum (strain ATCC 700922 / JCM 11081 / NRC-1) (Halobacterium halobium) protein is Gas vesicle protein J2.